The primary structure comprises 168 residues: Photosystem I assembly protein Ycf3 (168 aa).

3 TPR repeats span residues 35–68 (AFTY…EIDP), 72–105 (SYIL…NPFL), and 120–153 (GEQA…TPGN).

Belongs to the Ycf3 family.

It localises to the plastid. Its subcellular location is the chloroplast thylakoid membrane. In terms of biological role, essential for the assembly of the photosystem I (PSI) complex. May act as a chaperone-like factor to guide the assembly of the PSI subunits. This is Photosystem I assembly protein Ycf3 from Solanum lycopersicum (Tomato).